Here is a 428-residue protein sequence, read N- to C-terminus: MFYTGSFWFIFFILPAIPFCHSWSVNNFLMTGPKAYLIYSSSVAAGAQSGIEECKYQFAWDKWNCPERTLQLSSHSGLRSDLNIHSTGASPAGSGLYDTGPTSPVWSINFNRILFSRLESHFNKTFLSRLQIPFPQGHTVQSATSLSTGFLSPANRETAFVHAISYAGVMYTLTRNCSLGDFDNCGCDDSRNGQLGGQGWLWGGCSDNVGFGETISKQFVDPLETGQDARAAMNLHNNEAGRKAVKSTMKRTCKCHGVSGSCTTQTCWLQLPEFREVGNYLKEKYHKALKVDLFHGAGNSAASRGAIAETFRSISKKEIVHLEDSPDYCLENKTLGLLGTEGRECLKRGKALSKWEKRSCRRLCGDCGLAVKERRADMVSSCNCKFHWCCAVKCEQCRKSVTKYFCVKKEKRGGGIPRKKESKLKKKL.

Positions 1–22 (MFYTGSFWFIFFILPAIPFCHS) are cleaved as a signal peptide. A disulfide bridge links Cys54 with Cys65. N-linked (GlcNAc...) asparagine glycans are attached at residues Asn123 and Asn176. Intrachain disulfides connect Cys177/Cys185, Cys187/Cys205, Cys253/Cys267, Cys255/Cys262, Cys329/Cys367, Cys345/Cys360, Cys364/Cys406, Cys382/Cys397, Cys384/Cys394, and Cys389/Cys390. Ser259 carries the O-palmitoleoyl serine lipid modification. N-linked (GlcNAc...) asparagine glycosylation occurs at Asn332.

Belongs to the Wnt family. Post-translationally, palmitoleoylation is required for efficient binding to frizzled receptors. Depalmitoleoylation leads to Wnt signaling pathway inhibition. Proteolytic processing by tiki1 and tiki2 promotes oxidation and formation of large disulfide-bond oligomers, leading to inactivation of wnt8b. In adults, in brain.

Its subcellular location is the secreted. It localises to the extracellular space. It is found in the extracellular matrix. In terms of biological role, ligand for members of the frizzled family of seven transmembrane receptors. Plays a role in the initiation of dorsal axis development. May activate a Nieuwkoop center-like signaling pathway. This is Protein Wnt-8b (wnt8b) from Xenopus laevis (African clawed frog).